The primary structure comprises 316 residues: Pantothenate kinase (316 aa).

95–102 (GSVAVGKS) is a binding site for ATP.

The protein belongs to the prokaryotic pantothenate kinase family.

Its subcellular location is the cytoplasm. It carries out the reaction (R)-pantothenate + ATP = (R)-4'-phosphopantothenate + ADP + H(+). Its pathway is cofactor biosynthesis; coenzyme A biosynthesis; CoA from (R)-pantothenate: step 1/5. The protein is Pantothenate kinase of Shewanella sp. (strain MR-7).